The sequence spans 160 residues: Cytochrome c-type biogenesis protein CcmE (160 aa).

Topologically, residues 1–8 are cytoplasmic; it reads MNPRRKKR. A helical; Signal-anchor for type II membrane protein transmembrane segment spans residues 9–29; sequence LGIILAIFFGISATVGLMVYA. The Periplasmic portion of the chain corresponds to 30–160; that stretch reads LNQNMDLFYT…TTEQKEGNAQ (131 aa). Heme is bound by residues histidine 128 and tyrosine 132.

Belongs to the CcmE/CycJ family.

The protein resides in the cell inner membrane. In terms of biological role, heme chaperone required for the biogenesis of c-type cytochromes. Transiently binds heme delivered by CcmC and transfers the heme to apo-cytochromes in a process facilitated by CcmF and CcmH. In Vibrio atlanticus (strain LGP32) (Vibrio splendidus (strain Mel32)), this protein is Cytochrome c-type biogenesis protein CcmE.